The following is a 208-amino-acid chain: Large ribosomal subunit protein uL4 (208 aa).

Residues 45–78 (RQGTAKSKERSEMSGSTRKLGRQKGSGGARRGDI) are disordered.

The protein belongs to the universal ribosomal protein uL4 family. As to quaternary structure, part of the 50S ribosomal subunit.

Its function is as follows. One of the primary rRNA binding proteins, this protein initially binds near the 5'-end of the 23S rRNA. It is important during the early stages of 50S assembly. It makes multiple contacts with different domains of the 23S rRNA in the assembled 50S subunit and ribosome. In terms of biological role, forms part of the polypeptide exit tunnel. The protein is Large ribosomal subunit protein uL4 of Azobacteroides pseudotrichonymphae genomovar. CFP2.